Reading from the N-terminus, the 161-residue chain is Nucleotide-binding protein AZOSEA28950 (161 aa).

It belongs to the YajQ family.

In terms of biological role, nucleotide-binding protein. This Aromatoleum aromaticum (strain DSM 19018 / LMG 30748 / EbN1) (Azoarcus sp. (strain EbN1)) protein is Nucleotide-binding protein AZOSEA28950.